Consider the following 92-residue polypeptide: N(2)-fixation sustaining protein CowN (92 aa).

This sequence belongs to the CowN family.

Its function is as follows. Is required to sustain N(2)-dependent growth in the presence of low levels of carbon monoxide (CO). Probably acts by protecting the N(2) fixation ability of the nitrogenase complex, which is inactivated in the presence of CO. In Rhodopseudomonas palustris (strain BisB18), this protein is N(2)-fixation sustaining protein CowN.